Here is a 757-residue protein sequence, read N- to C-terminus: Chloride channel protein C (757 aa).

Topologically, residues 1–96 are cytoplasmic; it reads MGSSLNKPLS…LHLKKTFGKW (96 aa). Transmembrane regions (helical) follow at residues 97 to 117, 141 to 161, 196 to 216, 253 to 273, 292 to 312, 337 to 357, 378 to 398, 462 to 482, 484 to 504, 506 to 526, and 535 to 555; these read IICL…KMVV, FLTF…MVIV, IVSL…GPMI, FISI…IGGV, TFFT…GIGS, LLCF…FVFL, FEAL…SFIF, LLVF…LWVA, GLFV…GQTI, MWFT…AMMA, and IVVI…IILA. CBS domains are found at residues 600–667 and 710–757; these read MSKN…TGEE and MNSS…NDLF.

Belongs to the chloride channel (TC 2.A.49) family.

Its subcellular location is the membrane. Its function is as follows. Voltage-gated chloride channel. Chloride channels may have several functions including the regulation of cell volume, membrane potential stabilization and signal transduction. This is Chloride channel protein C (clcC) from Dictyostelium discoideum (Social amoeba).